The following is a 213-amino-acid chain: Uracil phosphoribosyltransferase (213 aa).

5-phospho-alpha-D-ribose 1-diphosphate is bound by residues Arg-78, Arg-103, and 131-139; that span reads DPMLATGGT. Uracil-binding positions include Ile-197 and 202 to 204; that span reads GDA. Residue Asp-203 participates in 5-phospho-alpha-D-ribose 1-diphosphate binding.

The protein belongs to the UPRTase family. It depends on Mg(2+) as a cofactor.

The catalysed reaction is UMP + diphosphate = 5-phospho-alpha-D-ribose 1-diphosphate + uracil. It functions in the pathway pyrimidine metabolism; UMP biosynthesis via salvage pathway; UMP from uracil: step 1/1. Its activity is regulated as follows. Allosterically activated by GTP. Functionally, catalyzes the conversion of uracil and 5-phospho-alpha-D-ribose 1-diphosphate (PRPP) to UMP and diphosphate. This chain is Uracil phosphoribosyltransferase, found in Bifidobacterium adolescentis (strain ATCC 15703 / DSM 20083 / NCTC 11814 / E194a).